Here is a 327-residue protein sequence, read N- to C-terminus: Lipoyl synthase (327 aa).

The [4Fe-4S] cluster site is built by C66, C71, C77, C92, C96, C99, and S306. Positions 78–295 (FSKGTATFMI…EKEAYELGFS (218 aa)) constitute a Radical SAM core domain.

This sequence belongs to the radical SAM superfamily. Lipoyl synthase family. It depends on [4Fe-4S] cluster as a cofactor.

It is found in the cytoplasm. It catalyses the reaction [[Fe-S] cluster scaffold protein carrying a second [4Fe-4S](2+) cluster] + N(6)-octanoyl-L-lysyl-[protein] + 2 oxidized [2Fe-2S]-[ferredoxin] + 2 S-adenosyl-L-methionine + 4 H(+) = [[Fe-S] cluster scaffold protein] + N(6)-[(R)-dihydrolipoyl]-L-lysyl-[protein] + 4 Fe(3+) + 2 hydrogen sulfide + 2 5'-deoxyadenosine + 2 L-methionine + 2 reduced [2Fe-2S]-[ferredoxin]. The protein operates within protein modification; protein lipoylation via endogenous pathway; protein N(6)-(lipoyl)lysine from octanoyl-[acyl-carrier-protein]: step 2/2. Its function is as follows. Catalyzes the radical-mediated insertion of two sulfur atoms into the C-6 and C-8 positions of the octanoyl moiety bound to the lipoyl domains of lipoate-dependent enzymes, thereby converting the octanoylated domains into lipoylated derivatives. This chain is Lipoyl synthase, found in Neisseria meningitidis serogroup A / serotype 4A (strain DSM 15465 / Z2491).